The sequence spans 415 residues: Histidine--tRNA ligase (415 aa).

This sequence belongs to the class-II aminoacyl-tRNA synthetase family. Homodimer.

Its subcellular location is the cytoplasm. The enzyme catalyses tRNA(His) + L-histidine + ATP = L-histidyl-tRNA(His) + AMP + diphosphate + H(+). This chain is Histidine--tRNA ligase, found in Clostridium botulinum (strain Okra / Type B1).